The following is a 509-amino-acid chain: Maturase K (509 aa).

Belongs to the intron maturase 2 family. MatK subfamily.

It is found in the plastid. Its subcellular location is the chloroplast. Its function is as follows. Usually encoded in the trnK tRNA gene intron. Probably assists in splicing its own and other chloroplast group II introns. The sequence is that of Maturase K from Citrus sinensis (Sweet orange).